The primary structure comprises 340 residues: Putative transport protein AF_1800 (340 aa).

The next 7 helical transmembrane spans lie at 7-27, 57-77, 140-160, 193-213, 225-245, 260-280, and 290-310; these read LVLL…FTPL, SVIA…YGLI, TLLI…LADM, LWFG…PFFL, GLMF…ILPV, FLLI…RPYF, and LVLM…GFFI.

This sequence belongs to the autoinducer-2 exporter (AI-2E) (TC 2.A.86) family.

It is found in the cell membrane. In Archaeoglobus fulgidus (strain ATCC 49558 / DSM 4304 / JCM 9628 / NBRC 100126 / VC-16), this protein is Putative transport protein AF_1800.